A 309-amino-acid polypeptide reads, in one-letter code: Homoserine kinase (309 aa).

An ATP-binding site is contributed by Pro-85 to Ser-95.

Belongs to the GHMP kinase family. Homoserine kinase subfamily.

It is found in the cytoplasm. It catalyses the reaction L-homoserine + ATP = O-phospho-L-homoserine + ADP + H(+). It participates in amino-acid biosynthesis; L-threonine biosynthesis; L-threonine from L-aspartate: step 4/5. Catalyzes the ATP-dependent phosphorylation of L-homoserine to L-homoserine phosphate. The sequence is that of Homoserine kinase from Thermoplasma volcanium (strain ATCC 51530 / DSM 4299 / JCM 9571 / NBRC 15438 / GSS1).